A 392-amino-acid chain; its full sequence is S-adenosylmethionine synthase (392 aa).

Position 20 (His-20) interacts with ATP. Residue Asp-22 coordinates Mg(2+). Glu-48 provides a ligand contact to K(+). Residues Glu-61 and Gln-106 each coordinate L-methionine. A flexible loop region spans residues 106–116 (QSRDIINAIEK). ATP-binding positions include 171-173 (DSK), Asp-248, 254-255 (RK), Ala-271, and Lys-275. Asp-248 is a binding site for L-methionine. Lys-279 provides a ligand contact to L-methionine.

The protein belongs to the AdoMet synthase family. As to quaternary structure, homotetramer; dimer of dimers. Mg(2+) serves as cofactor. The cofactor is K(+).

The protein localises to the cytoplasm. It carries out the reaction L-methionine + ATP + H2O = S-adenosyl-L-methionine + phosphate + diphosphate. The protein operates within amino-acid biosynthesis; S-adenosyl-L-methionine biosynthesis; S-adenosyl-L-methionine from L-methionine: step 1/1. Catalyzes the formation of S-adenosylmethionine (AdoMet) from methionine and ATP. The overall synthetic reaction is composed of two sequential steps, AdoMet formation and the subsequent tripolyphosphate hydrolysis which occurs prior to release of AdoMet from the enzyme. The protein is S-adenosylmethionine synthase of Borreliella burgdorferi (strain ATCC 35210 / DSM 4680 / CIP 102532 / B31) (Borrelia burgdorferi).